A 300-amino-acid chain; its full sequence is Recombination-promoting nuclease RpnC (300 aa).

This sequence belongs to the Rpn/YhgA-like nuclease family.

A low activity DNA endonuclease yielding 3'-hydroxyl ends. Upon expression enhances RecA-independent DNA recombination 2.9-fold, concomitantly reducing viability by 59% and inducing DNA damage as measured by induction of the SOS repair response. The chain is Recombination-promoting nuclease RpnC from Escherichia coli (strain K12).